Consider the following 447-residue polypeptide: SPARC-related modular calcium-binding protein 2 (447 aa).

The N-terminal stretch at 1–21 (MLPPQLCWLPLLAALLPPVPA) is a signal peptide. Residues 34–86 (QDKDRDCSLDCPSSPQKPLCASDGRTFLSRCEFQRAKCKDPQLEIAHRGNCKD) enclose the Kazal-like domain. 6 cysteine pairs are disulfide-bonded: C40–C71, C44–C64, C53–C84, C90–C113, C124–C131, and C133–C153. One can recognise a Thyroglobulin type-1 1 domain in the interval 87–153 (VSRCVAERKY…TAVAHKTPRC (67 aa)). Positions 147–230 (AHKTPRCPGS…QSALEEAKQP (84 aa)) are disordered. Residues 161-172 (VPQREGAGKADD) show a composition bias toward basic and acidic residues. N-linked (GlcNAc...) asparagine glycosylation occurs at N206. Over residues 206–216 (NKTNKNSASSC) the composition is skewed to polar residues. Residues 213–281 (ASSCDQEHQS…TSTRYEQPKC (69 aa)) form the Thyroglobulin type-1 2 domain. 3 disulfides stabilise this stretch: C216–C240, C251–C258, and C260–C281. Residues 217–230 (DQEHQSALEEAKQP) show a composition bias toward basic and acidic residues. 2 EF-hand domains span residues 347 to 382 (LEER…LRKK) and 384 to 419 (KPKK…TREE). Ca(2+)-binding residues include D360, N362, S364, D366, E371, D397, N399, D401, S403, and E408. Residue N362 is glycosylated (N-linked (GlcNAc...) asparagine). Residues 416–447 (TREEGKANTRKRHTPRGNAESSSSNRQPRKQG) are disordered.

In terms of assembly, binds various proteins from the extracellular matrix. N-glycosylated. As to expression, strongly expressed in ovary, followed by heart, muscle, spleen, brain, thymus, lung, liver, kidney, spleen, testis, ovary and skeletal muscle.

It localises to the secreted. The protein localises to the extracellular space. The protein resides in the extracellular matrix. It is found in the basement membrane. Functionally, can stimulate endothelial cell proliferation, migration, as well as angiogenesis. Promotes matrix assembly and cell adhesiveness. In Mus musculus (Mouse), this protein is SPARC-related modular calcium-binding protein 2 (Smoc2).